The chain runs to 277 residues: Uridine-cytidine kinase 1 (277 aa).

The segment at Met-1 to Gly-30 is disordered. Position 30-38 (Gly-30–Thr-38) interacts with ATP. The substrate site is built by Asp-87, Tyr-115, His-120, Arg-169, Arg-178, and Gln-186. Asp-215 contacts ATP. Residues Arg-238–Arg-250 show a composition bias toward basic residues. The disordered stretch occupies residues Arg-238–His-277. Position 251 is a phosphothreonine (Thr-251). Over residues Ser-268 to His-277 the composition is skewed to basic and acidic residues.

Belongs to the uridine kinase family.

It catalyses the reaction uridine + ATP = UMP + ADP + H(+). The catalysed reaction is cytidine + ATP = CMP + ADP + H(+). Its pathway is pyrimidine metabolism; CTP biosynthesis via salvage pathway; CTP from cytidine: step 1/3. The protein operates within pyrimidine metabolism; UMP biosynthesis via salvage pathway; UMP from uridine: step 1/1. In terms of biological role, phosphorylates uridine and cytidine to uridine monophosphate and cytidine monophosphate. Does not phosphorylate deoxyribonucleosides or purine ribonucleosides. Can use ATP or GTP as a phosphate donor. This Mus musculus (Mouse) protein is Uridine-cytidine kinase 1 (Uck1).